A 339-amino-acid chain; its full sequence is Nitrilase (339 aa).

The CN hydrolase domain maps to 7–277 (YRVAAVQASP…EGITYADIDL (271 aa)). Catalysis depends on Glu-47, which acts as the Proton acceptor. Lys-128 acts as the Proton donor in catalysis. The Nucleophile role is filled by Cys-162.

The protein belongs to the carbon-nitrogen hydrolase superfamily. Nitrilase family.

The catalysed reaction is a nitrile + 2 H2O = a carboxylate + NH4(+). This chain is Nitrilase (nit), found in Bacillus sp. (strain OxB-1).